The primary structure comprises 488 residues: Ribulose bisphosphate carboxylase large chain (488 aa).

Substrate-binding residues include Asn127 and Thr177. The Proton acceptor role is filled by Lys179. A substrate-binding site is contributed by Lys181. Mg(2+)-binding residues include Lys205, Asp207, and Glu208. The residue at position 205 (Lys205) is an N6-carboxylysine. His297 (proton acceptor) is an active-site residue. 3 residues coordinate substrate: Arg298, His330, and Ser382.

The protein belongs to the RuBisCO large chain family. Type I subfamily. In terms of assembly, heterohexadecamer of 8 large chains and 8 small chains. Mg(2+) serves as cofactor.

It localises to the plastid. The protein localises to the chloroplast. The catalysed reaction is 2 (2R)-3-phosphoglycerate + 2 H(+) = D-ribulose 1,5-bisphosphate + CO2 + H2O. It catalyses the reaction D-ribulose 1,5-bisphosphate + O2 = 2-phosphoglycolate + (2R)-3-phosphoglycerate + 2 H(+). Its function is as follows. RuBisCO catalyzes two reactions: the carboxylation of D-ribulose 1,5-bisphosphate, the primary event in carbon dioxide fixation, as well as the oxidative fragmentation of the pentose substrate in the photorespiration process. Both reactions occur simultaneously and in competition at the same active site. The chain is Ribulose bisphosphate carboxylase large chain from Ectocarpus siliculosus (Brown alga).